Consider the following 336-residue polypeptide: Fructokinase-2 (336 aa).

It belongs to the carbohydrate kinase PfkB family. In terms of tissue distribution, expressed in stem, sheaths, anthers, and panicles (at protein level).

It carries out the reaction D-fructose + ATP = D-fructose 6-phosphate + ADP + H(+). It functions in the pathway glycan biosynthesis; starch biosynthesis. Its activity is regulated as follows. Strongly inhibited at high fructose concentration. Functionally, may play an important role in maintaining the flux of carbon towards starch formation in endosperm. May also be involved in a sugar-sensing pathway. The chain is Fructokinase-2 (FRK2) from Oryza sativa subsp. japonica (Rice).